Reading from the N-terminus, the 238-residue chain is MARACLQAVKYLMFAFNLLFWLGGCGVLGVGIWLAATQGSFATLSSSFPSLSAANLLIITGAFVMAIGFVGCLGAIKENKCLLLTFFLLLLLVFLLEATIAILFFAYTDKIDRYAQRDLKKGLHLYGTQGNVGLTNAWTIIQTDFRCCGVSNYTDWFEVYNATRVPDSCCLEFSESCGLHAPGTWWKAPCYETVKVWLQENLLAVGIFGLCTALVQILGLTFAMTMYCQVVKADTYCA.

The Cytoplasmic portion of the chain corresponds to Met1–Met13. Residues Phe14–Leu34 traverse the membrane as a helical segment. Topologically, residues Ala35 to Asn55 are extracellular. A helical transmembrane segment spans residues Leu56 to Ile76. The Cytoplasmic segment spans residues Lys77–Thr85. A helical transmembrane segment spans residues Phe86–Ala106. At Tyr107–Asn201 the chain is on the extracellular side. N-linked (GlcNAc...) asparagine glycosylation is found at Asn152 and Asn161. The helical transmembrane segment at Leu202–Phe222 threads the bilayer. The Cytoplasmic segment spans residues Ala223–Ala238.

It belongs to the tetraspanin (TM4SF) family. Forms a complex with integrins.

The protein resides in the membrane. This is Tetraspanin-4 (TSPAN4) from Pongo abelii (Sumatran orangutan).